The sequence spans 378 residues: Acetylornithine deacetylase (378 aa).

His-76 contributes to the Zn(2+) binding site. Asp-78 is an active-site residue. Asp-108 contributes to the Zn(2+) binding site. Glu-140 is a catalytic residue. Glu-141, Glu-165, and His-351 together coordinate Zn(2+).

The protein belongs to the peptidase M20A family. ArgE subfamily. As to quaternary structure, homodimer. Zn(2+) is required as a cofactor. Co(2+) serves as cofactor. Requires glutathione as cofactor.

Its subcellular location is the cytoplasm. It catalyses the reaction N(2)-acetyl-L-ornithine + H2O = L-ornithine + acetate. The protein operates within amino-acid biosynthesis; L-arginine biosynthesis; L-ornithine from N(2)-acetyl-L-ornithine (linear): step 1/1. Functionally, catalyzes the hydrolysis of the amide bond of N(2)-acetylated L-amino acids. Cleaves the acetyl group from N-acetyl-L-ornithine to form L-ornithine, an intermediate in L-arginine biosynthesis pathway, and a branchpoint in the synthesis of polyamines. In Aliivibrio salmonicida (strain LFI1238) (Vibrio salmonicida (strain LFI1238)), this protein is Acetylornithine deacetylase.